We begin with the raw amino-acid sequence, 73 residues long: Salivary protein FS48 (73 aa).

The signal sequence occupies residues 1–21; the sequence is MKFAFAIFVVLAILHTELISA.

The protein localises to the secreted. Salivary protein that inhibits host voltage-gated potassium channels Kv1.1/KCNA1, Kv1.2/KCNA2 and Kv1.3/KCNA3 likely via a voltage-independent pore-blocking mechanism. Suppresses expression of the Kv1.3/KCNA3 channel in lipopolysaccharide (LPS)-stimulated mouse macrophages and human T-cells. Down-regulates secretion of nitric oxide (NO) and inflammatory cytokines, such as TNF-alpha/TNF, IL-1beta/IL1B and IL6, in LPS-stimulated mouse macrophages in a manner dependent on Kv1.3/KCNA3 channel blockage. Reduces activation of MAPK and NF-kappa-B signaling pathways in LPS-stimulated mouse macrophages. Modulates intracellular Ca(2+) signaling in human PMA/ionomycin-triggered T-cells. Interferes with the activation of the MAPK, NF-kappa-B and NFATc1 pathways in human PMA/ionomycin-triggered T-cells. Reduces proliferation of human PMA/ionomycin-triggered T-cells. Down-regulates secretion of cytokines, such as TNF-alpha/TNF and IL2, in human PMA/ionomycin-triggered T-cells. In Xenopsylla cheopis (Oriental rat flea), this protein is Salivary protein FS48.